A 562-amino-acid chain; its full sequence is Oxygen-dependent choline dehydrogenase (562 aa).

An FAD-binding site is contributed by 4–33 (DYIIIGAGSAGNVLATRLTEDPNTSVLLLE). Histidine 473 functions as the Proton acceptor in the catalytic mechanism.

This sequence belongs to the GMC oxidoreductase family. Requires FAD as cofactor.

The protein resides in the cell membrane. The catalysed reaction is choline + A = betaine aldehyde + AH2. It catalyses the reaction betaine aldehyde + NAD(+) + H2O = glycine betaine + NADH + 2 H(+). Its pathway is amine and polyamine biosynthesis; betaine biosynthesis via choline pathway; betaine aldehyde from choline (cytochrome c reductase route): step 1/1. In terms of biological role, involved in the biosynthesis of the osmoprotectant glycine betaine. Catalyzes the oxidation of choline to betaine aldehyde and betaine aldehyde to glycine betaine at the same rate. The polypeptide is Oxygen-dependent choline dehydrogenase (Escherichia coli O157:H7).